Here is a 1293-residue protein sequence, read N- to C-terminus: Phosphoribosylformylglycinamidine synthase (1293 aa).

Residues 305–316 (GAATGSGGEIRD), 384–386 (TGY), and Ala-676 contribute to the ATP site. The disordered stretch occupies residues 307-326 (ATGSGGEIRDEGATGRGSKP). Mg(2+) contacts are provided by Asp-677, Glu-716, Asn-720, and Asp-884. Ser-886 provides a ligand contact to ATP. Positions 1040–1293 (MAILREQGVN…MFRNARVKIG (254 aa)) constitute a Glutamine amidotransferase type-1 domain. Cys-1133 serves as the catalytic Nucleophile. Catalysis depends on residues His-1258 and Glu-1260.

In the N-terminal section; belongs to the FGAMS family. As to quaternary structure, monomer.

The protein resides in the cytoplasm. The catalysed reaction is N(2)-formyl-N(1)-(5-phospho-beta-D-ribosyl)glycinamide + L-glutamine + ATP + H2O = 2-formamido-N(1)-(5-O-phospho-beta-D-ribosyl)acetamidine + L-glutamate + ADP + phosphate + H(+). It functions in the pathway purine metabolism; IMP biosynthesis via de novo pathway; 5-amino-1-(5-phospho-D-ribosyl)imidazole from N(2)-formyl-N(1)-(5-phospho-D-ribosyl)glycinamide: step 1/2. Functionally, phosphoribosylformylglycinamidine synthase involved in the purines biosynthetic pathway. Catalyzes the ATP-dependent conversion of formylglycinamide ribonucleotide (FGAR) and glutamine to yield formylglycinamidine ribonucleotide (FGAM) and glutamate. This is Phosphoribosylformylglycinamidine synthase from Shewanella frigidimarina (strain NCIMB 400).